The primary structure comprises 95 residues: Aspartyl/glutamyl-tRNA(Asn/Gln) amidotransferase subunit C (95 aa).

This sequence belongs to the GatC family. In terms of assembly, heterotrimer of A, B and C subunits.

It catalyses the reaction L-glutamyl-tRNA(Gln) + L-glutamine + ATP + H2O = L-glutaminyl-tRNA(Gln) + L-glutamate + ADP + phosphate + H(+). It carries out the reaction L-aspartyl-tRNA(Asn) + L-glutamine + ATP + H2O = L-asparaginyl-tRNA(Asn) + L-glutamate + ADP + phosphate + 2 H(+). Functionally, allows the formation of correctly charged Asn-tRNA(Asn) or Gln-tRNA(Gln) through the transamidation of misacylated Asp-tRNA(Asn) or Glu-tRNA(Gln) in organisms which lack either or both of asparaginyl-tRNA or glutaminyl-tRNA synthetases. The reaction takes place in the presence of glutamine and ATP through an activated phospho-Asp-tRNA(Asn) or phospho-Glu-tRNA(Gln). The polypeptide is Aspartyl/glutamyl-tRNA(Asn/Gln) amidotransferase subunit C (Xanthobacter autotrophicus (strain ATCC BAA-1158 / Py2)).